The sequence spans 56 residues: UPF0434 protein Sden_2197 (56 aa).

This sequence belongs to the UPF0434 family.

The protein is UPF0434 protein Sden_2197 of Shewanella denitrificans (strain OS217 / ATCC BAA-1090 / DSM 15013).